A 343-amino-acid polypeptide reads, in one-letter code: Methionine import ATP-binding protein MetN 1 (343 aa).

The ABC transporter domain occupies 2-241; sequence IKLSNITKVF…PKTPLAQKFI (240 aa). 38 to 45 contacts ATP; that stretch reads GASGAGKS.

This sequence belongs to the ABC transporter superfamily. Methionine importer (TC 3.A.1.24) family. In terms of assembly, the complex is composed of two ATP-binding proteins (MetN), two transmembrane proteins (MetI) and a solute-binding protein (MetQ).

Its subcellular location is the cell inner membrane. It catalyses the reaction L-methionine(out) + ATP + H2O = L-methionine(in) + ADP + phosphate + H(+). The catalysed reaction is D-methionine(out) + ATP + H2O = D-methionine(in) + ADP + phosphate + H(+). In terms of biological role, part of the ABC transporter complex MetNIQ involved in methionine import. Responsible for energy coupling to the transport system. The sequence is that of Methionine import ATP-binding protein MetN 1 from Salmonella choleraesuis (strain SC-B67).